A 157-amino-acid chain; its full sequence is NADPH-dependent 7-cyano-7-deazaguanine reductase (157 aa).

The active-site Thioimide intermediate is the C55. D62 (proton donor) is an active-site residue. Residues 77-79 (VES) and 96-97 (HE) each bind substrate.

The protein belongs to the GTP cyclohydrolase I family. QueF type 1 subfamily.

It is found in the cytoplasm. The catalysed reaction is 7-aminomethyl-7-carbaguanine + 2 NADP(+) = 7-cyano-7-deazaguanine + 2 NADPH + 3 H(+). The protein operates within tRNA modification; tRNA-queuosine biosynthesis. Catalyzes the NADPH-dependent reduction of 7-cyano-7-deazaguanine (preQ0) to 7-aminomethyl-7-deazaguanine (preQ1). This Neisseria meningitidis serogroup C / serotype 2a (strain ATCC 700532 / DSM 15464 / FAM18) protein is NADPH-dependent 7-cyano-7-deazaguanine reductase.